We begin with the raw amino-acid sequence, 40 residues long: Photosystem II reaction center protein Y (40 aa).

The helical transmembrane segment at 5–23 (LIVVLAPILLAGGWAVFNI) threads the bilayer.

It belongs to the PsbY family. In terms of assembly, PSII is composed of 1 copy each of membrane proteins PsbA, PsbB, PsbC, PsbD, PsbE, PsbF, PsbH, PsbI, PsbJ, PsbK, PsbL, PsbM, PsbT, PsbX, PsbY, PsbZ, Psb30/Ycf12, peripheral proteins PsbO, CyanoQ (PsbQ), PsbU, PsbV and a large number of cofactors. It forms dimeric complexes.

Its subcellular location is the cellular thylakoid membrane. Loosely associated component of the core of photosystem II (PSII), it is not always seen in crystals. PSII is a light-driven water plastoquinone oxidoreductase, using light energy to abstract electrons from H(2)O, generating a proton gradient subsequently used for ATP formation. This chain is Photosystem II reaction center protein Y, found in Synechococcus elongatus (strain ATCC 33912 / PCC 7942 / FACHB-805) (Anacystis nidulans R2).